The sequence spans 979 residues: Protein SMAX1-LIKE 6 (979 aa).

Residues 8–190 (ARECLTEEAA…PVTQLSSRFS (183 aa)) form the Clp R domain. 2 repeat regions span residues 12–86 (LTEE…LDRL) and 100–190 (VSNS…SRFS). Residues 833–837 (LDLNL) carry the EAR motif.

The protein belongs to the ClpA/ClpB family. Interacts with TPL/TPR in an EAR-motif dependent manner. Interacts with TPR3. Interacts with MAX2 and TPR2. Interacts with D14. The interaction with D14 occurs in the presence of (2'R) stereoisomers of strigolactones, but not (2'S) stereoisomers. Post-translationally, ubiquitinated upon strigolactone treatment. Probable proteolytic target of SCF(MAX2)-mediated stigolactone signaling. Detected in roots, seedlings and axillary branches. Expressed in the primary rosette buds and expanding leaves of adult rosettes, the vasculature of the hypocotyls, cotyledons, and mature roots, and in the midvein and petioles of young leaves.

Its subcellular location is the nucleus. Functionally, probable component of a transcriptional corepressor complex involved in branching control. Regulates cotyledon expansion and lateral root growth, but not germination or hypocotyl elongation. Promotes auxin transport and PIN1 accumulation in the stem and represses BRC1/TCP18 expression in axillary buds. The sequence is that of Protein SMAX1-LIKE 6 from Arabidopsis thaliana (Mouse-ear cress).